A 103-amino-acid polypeptide reads, in one-letter code: UPF0134 protein MPN_484 (103 aa).

It belongs to the UPF0134 family.

This is UPF0134 protein MPN_484 from Mycoplasma pneumoniae (strain ATCC 29342 / M129 / Subtype 1) (Mycoplasmoides pneumoniae).